Here is a 287-residue protein sequence, read N- to C-terminus: Uroplakin-3a (287 aa).

A signal peptide spans M1–G18. At V19–G207 the chain is on the lumenal side. N-linked (GlcNAc...) asparagine glycans are attached at residues N74, N139, and N170. The helical transmembrane segment at M208–V235 threads the bilayer. At D236 to D287 the chain is on the cytoplasmic side. Residues A243–S274 are disordered. Residues L259 to R271 show a composition bias toward polar residues.

The protein belongs to the uroplakin-3 family. As to quaternary structure, heterodimer with uroplakin-1B (UPK1B). As to expression, bladder epithelium.

It is found in the endoplasmic reticulum membrane. Component of the asymmetric unit membrane (AUM); a highly specialized biomembrane elaborated by terminally differentiated urothelial cells. May play an important role in AUM-cytoskeleton interaction in terminally differentiated urothelial cells. It also contributes to the formation of urothelial glycocalyx which may play an important role in preventing bacterial adherence. In Bos taurus (Bovine), this protein is Uroplakin-3a (UPK3A).